Here is a 59-residue protein sequence, read N- to C-terminus: Large ribosomal subunit protein bL32 (59 aa).

A compositionally biased stretch (basic residues) spans 1–16 (MAVPKRKTSPSRRGMR). Positions 1 to 20 (MAVPKRKTSPSRRGMRRSHD) are disordered.

This sequence belongs to the bacterial ribosomal protein bL32 family.

The polypeptide is Large ribosomal subunit protein bL32 (Novosphingobium aromaticivorans (strain ATCC 700278 / DSM 12444 / CCUG 56034 / CIP 105152 / NBRC 16084 / F199)).